Here is a 737-residue protein sequence, read N- to C-terminus: Glycogen [starch] synthase, muscle (737 aa).

Position 8 is a phosphoserine; by AMPK and PKA (serine 8). Serine 11 carries the phosphoserine modification. Lysine 39 is a UDP binding site. 2 residues coordinate UDP-alpha-D-glucose: histidine 205 and arginine 211. Alpha-D-glucose 6-phosphate contacts are provided by histidine 291, glutamate 292, glutamine 294, histidine 297, and lysine 301. Arginine 331 contacts UDP. Arginine 331 provides a ligand contact to UDP-alpha-D-glucose. Serine 412 bears the Phosphoserine mark. Histidine 501 contributes to the alpha-D-glucose 6-phosphate binding site. UDP-alpha-D-glucose is bound by residues glutamate 510, tryptophan 512, and glycine 513. Residue threonine 515 coordinates UDP. Positions 582 and 586 each coordinate alpha-D-glucose 6-phosphate. The segment at 634-737 is disordered; sequence YRYPRPASVP…PTSSLGEERN (104 aa). Residues serine 641, serine 645, serine 649, and serine 652 each carry the phosphoserine modification. Serine 653 bears the Phosphoserine; by GSK3-alpha and GSK3-beta mark. Serine 657 is subject to Phosphoserine; by CK2. The segment covering 658-681 has biased composition (acidic residues); the sequence is EDEEDPRNGPLEEDGERYDEDEEA. Basic and acidic residues predominate over residues 682–695; that stretch reads AKDRRNIRAPEWPR. At serine 698 the chain carries Phosphoserine. A compositionally biased stretch (polar residues) spans 698–714; the sequence is SCTSSTSGSKRNSVDTA. Threonine 700 carries the phosphothreonine modification. Serine 710 carries the phosphoserine modification. A compositionally biased stretch (low complexity) spans 715–737; sequence TSSSLSTPSEPLSPTSSLGEERN. Residue threonine 721 is modified to Phosphothreonine. Residues serine 727 and serine 731 each carry the phosphoserine modification.

The protein belongs to the glycosyltransferase 3 family. In terms of assembly, part of the GYS1-GYG1 complex, a heterooctamer composed of a tetramer of GYS1 and 2 dimers of GYG1, where each GYS1 protomer binds to one GYG1 subunit (via GYG1 C-terminus); the GYS1 tetramer may dissociate from GYG1 dimers to continue glycogen polymerization on its own. Post-translationally, phosphorylation at Ser-8 by AMPK inactivates the enzyme activity. Primed phosphorylation at Ser-657 (site 5) by CSNK2A1 and CSNK2A2 is required for inhibitory phosphorylation at Ser-641 (site 3a), Ser-645 (site 3b), Ser-649 (site 3c) and Ser-653 (site 4) by GSK3A an GSK3B. Phosphorylated at Ser-641 by DYRK2, leading to inactivation. Phosphorylated at Ser-641 by PASK, leading to inactivation; phosphorylation by PASK is inhibited by glycogen. Dephosphorylation at Ser-641 and Ser-645 by PP1 activates the enzyme. As to expression, expressed in skeletal muscle and most other cell types where glycogen is present.

The enzyme catalyses [(1-&gt;4)-alpha-D-glucosyl](n) + UDP-alpha-D-glucose = [(1-&gt;4)-alpha-D-glucosyl](n+1) + UDP + H(+). It participates in glycan biosynthesis; glycogen biosynthesis. With respect to regulation, allosteric activation by glucose-6-phosphate. Phosphorylation reduces enzyme activity by constraining a tense conformation of the tetramer through inter-subunit interaction. Phosphorylation reduces the activity towards UDP-glucose. When in the non-phosphorylated state, glycogen synthase does not require glucose-6-phosphate as an allosteric activator; when phosphorylated it does. In terms of biological role, glycogen synthase participates in the glycogen biosynthetic process along with glycogenin and glycogen branching enzyme. Extends the primer composed of a few glucose units formed by glycogenin by adding new glucose units to it. In this context, glycogen synthase transfers the glycosyl residue from UDP-Glc to the non-reducing end of alpha-1,4-glucan. This is Glycogen [starch] synthase, muscle from Homo sapiens (Human).